Here is a 185-residue protein sequence, read N- to C-terminus: Ribosome-recycling factor (185 aa).

Belongs to the RRF family.

The protein localises to the cytoplasm. Its function is as follows. Responsible for the release of ribosomes from messenger RNA at the termination of protein biosynthesis. May increase the efficiency of translation by recycling ribosomes from one round of translation to another. This chain is Ribosome-recycling factor, found in Haemophilus influenzae (strain 86-028NP).